The sequence spans 349 residues: S-adenosylmethionine:tRNA ribosyltransferase-isomerase (349 aa).

It belongs to the QueA family. Monomer.

Its subcellular location is the cytoplasm. The catalysed reaction is 7-aminomethyl-7-carbaguanosine(34) in tRNA + S-adenosyl-L-methionine = epoxyqueuosine(34) in tRNA + adenine + L-methionine + 2 H(+). It participates in tRNA modification; tRNA-queuosine biosynthesis. Functionally, transfers and isomerizes the ribose moiety from AdoMet to the 7-aminomethyl group of 7-deazaguanine (preQ1-tRNA) to give epoxyqueuosine (oQ-tRNA). The chain is S-adenosylmethionine:tRNA ribosyltransferase-isomerase from Azotobacter vinelandii (strain DJ / ATCC BAA-1303).